A 183-amino-acid chain; its full sequence is Caltractin ICL1c (183 aa).

A disordered region spans residues 1–30; the sequence is MARRGQQPPPQQQQAPPTQKNQAGKFNPAE. EF-hand domains lie at 39–74, 75–110, 112–147, and 148–183; these read EEVL…LGFE, AKNQ…RISE, DSKA…LGET, and MDDS…KTFA. Ca(2+) contacts are provided by aspartate 52, aspartate 54, threonine 56, serine 58, glutamate 63, aspartate 88, aspartate 90, serine 92, glutamine 94, and glutamate 99.

This sequence belongs to the centrin family. In terms of assembly, monomer.

The protein localises to the cytoplasm. The protein resides in the cytoskeleton. Functionally, plays a fundamental role in microtubule organizing center structure and function. Component of the infraciliary lattice (ICL) and the ciliary basal bodies. The polypeptide is Caltractin ICL1c (Icl1c) (Paramecium tetraurelia).